Consider the following 264-residue polypeptide: ATP synthase subunit a (264 aa).

The next 6 membrane-spanning stretches (helical) occupy residues 29-49, 87-107, 134-154, 177-197, 208-228, and 235-255; these read TWHIDSLFFSVGLGVLFLWIF, NALIAPLALTIFVWVFMMNFM, DVNITFSLAIGVFVLIIYYSI, IPVNLLLETVTLIAKPISLAL, LIFILIALMYGTNLLLSSLGV, and LIFHILVITLQAFIFMMLTIV.

The protein belongs to the ATPase A chain family. As to quaternary structure, F-type ATPases have 2 components, CF(1) - the catalytic core - and CF(0) - the membrane proton channel. CF(1) has five subunits: alpha(3), beta(3), gamma(1), delta(1), epsilon(1). CF(0) has three main subunits: a(1), b(2) and c(9-12). The alpha and beta chains form an alternating ring which encloses part of the gamma chain. CF(1) is attached to CF(0) by a central stalk formed by the gamma and epsilon chains, while a peripheral stalk is formed by the delta and b chains.

Its subcellular location is the cell inner membrane. Its function is as follows. Key component of the proton channel; it plays a direct role in the translocation of protons across the membrane. This is ATP synthase subunit a from Shewanella sp. (strain MR-4).